The primary structure comprises 417 residues: Cobalamin binding intrinsic factor (417 aa).

Positions 1–18 are cleaved as a signal peptide; it reads MAWLTLYLLSVLWAVAGT. 3 disulfides stabilise this stretch: Cys26-Cys246, Cys103-Cys288, and Cys143-Cys182. Position 171 (Asp171) interacts with cob(II)alamin. Position 191 is a phosphoserine (Ser191). Cob(II)alamin contacts are provided by Asp222 and Gln270. N-linked (GlcNAc...) asparagine glycosylation is found at Asn311 and Asn330. Cob(II)alamin contacts are provided by residues 365–370 and 386–395; these read SWGLIV and WEFLSGKTPL. N-linked (GlcNAc...) asparagine glycosylation is present at Asn413.

This sequence belongs to the eukaryotic cobalamin transport proteins family. In terms of assembly, interacts with CUBN (via CUB domains). As to expression, gastric mucosa.

The protein localises to the secreted. In terms of biological role, promotes absorption of the essential vitamin cobalamin (Cbl) in the ileum. After interaction with CUBN, the CBLIF-cobalamin complex is internalized via receptor-mediated endocytosis. This chain is Cobalamin binding intrinsic factor (Cblif), found in Mus musculus (Mouse).